Consider the following 519-residue polypeptide: ATP synthase subunit beta (519 aa).

A compositionally biased stretch (low complexity) spans 1-26 (MAKAATPKRAPARAAAIPAAATPAAK). Residues 1–40 (MAKAATPKRAPARAAAIPAAATPAAKPAKRASTRSAAARS) are disordered. ATP is bound at residue 197-204 (GGAGVGKT).

This sequence belongs to the ATPase alpha/beta chains family. As to quaternary structure, F-type ATPases have 2 components, CF(1) - the catalytic core - and CF(0) - the membrane proton channel. CF(1) has five subunits: alpha(3), beta(3), gamma(1), delta(1), epsilon(1). CF(0) has three main subunits: a(1), b(2) and c(9-12). The alpha and beta chains form an alternating ring which encloses part of the gamma chain. CF(1) is attached to CF(0) by a central stalk formed by the gamma and epsilon chains, while a peripheral stalk is formed by the delta and b chains.

It localises to the cell inner membrane. The enzyme catalyses ATP + H2O + 4 H(+)(in) = ADP + phosphate + 5 H(+)(out). Its function is as follows. Produces ATP from ADP in the presence of a proton gradient across the membrane. The catalytic sites are hosted primarily by the beta subunits. The polypeptide is ATP synthase subunit beta (Chelativorans sp. (strain BNC1)).